Reading from the N-terminus, the 855-residue chain is Pre-mRNA-splicing factor SYF1 (855 aa).

HAT repeat units follow at residues 15 to 47 (LVFE…FKQG), 48 to 80 (APKP…ARRA), 90 to 122 (PAYE…FLMD), 124 to 158 (GRVT…FLRS), 160 to 192 (PLPE…SSDR), 198 to 230 (QRLA…LISQ), 235 to 268 (VQSL…YYIR), 270 to 305 (GHFE…FEES), and 369 to 407 (GRPR…FYED). Lysine 420 carries the N6-acetyllysine modification. 5 HAT repeats span residues 498 to 530 (GTFQ…FLEE), 532 to 566 (KYFE…KFIS), 571 to 605 (RKLE…LEEE), 643 to 677 (YGVT…MECK), and 679 to 713 (GEID…FEVR). Positions 808–855 (AELAQQANPEEIQLGEDEDEDEMDLEPNEVRLEQQSVPAAVFGSLKED) are disordered. The segment covering 820-834 (QLGEDEDEDEMDLEP) has biased composition (acidic residues). Serine 851 is modified (phosphoserine).

The protein belongs to the crooked-neck family. In terms of assembly, associates with RNA polymerase II, the TCR-specific proteins CKN1/CSA and ERCC6/CSB, and XPA. Identified in the spliceosome C complex. Component of the XAB2 complex, a multimeric protein complex composed of XAB2, PRPF19, AQR, ZNF830, ISY1, and PPIE. Identified in a pentameric intron-binding (IB) complex composed of AQR, XAB2, ISY1, ZNF830 and PPIE that is incorporated into the spliceosome as a preassembled complex. The IB complex does not contain PRPF19.

The protein resides in the nucleus. Its function is as follows. Involved in pre-mRNA splicing as component of the spliceosome. Involved in transcription-coupled repair (TCR), transcription and pre-mRNA splicing. This is Pre-mRNA-splicing factor SYF1 (Xab2) from Rattus norvegicus (Rat).